A 380-amino-acid chain; its full sequence is Cytochrome b (380 aa).

The next 4 membrane-spanning stretches (helical) occupy residues Phe33–Met53, Trp77–Val98, Trp113–Leu133, and Phe178–Leu198. Heme b is bound by residues His83 and His97. His182 and His196 together coordinate heme b. His201 lines the a ubiquinone pocket. Helical transmembrane passes span Tyr226–Ser246, Leu288–His308, Leu320–Gly340, and Phe347–Pro367.

This sequence belongs to the cytochrome b family. In terms of assembly, the cytochrome bc1 complex contains 3 respiratory subunits (MT-CYB, CYC1 and UQCRFS1), 2 core proteins (UQCRC1 and UQCRC2) and probably 6 low-molecular weight proteins. The cofactor is heme b.

It localises to the mitochondrion inner membrane. In terms of biological role, component of the ubiquinol-cytochrome c reductase complex (complex III or cytochrome b-c1 complex) that is part of the mitochondrial respiratory chain. The b-c1 complex mediates electron transfer from ubiquinol to cytochrome c. Contributes to the generation of a proton gradient across the mitochondrial membrane that is then used for ATP synthesis. The polypeptide is Cytochrome b (mt-cyb) (Acipenser persicus (Persian sturgeon)).